The chain runs to 713 residues: BBSome complex assembly protein BBS10 (713 aa).

The protein belongs to the TCP-1 chaperonin family. Component of a complex composed at least of MKKS, BBS10, BBS12, TCP1, CCT2, CCT3, CCT4, CCT5 and CCT8.

The protein resides in the cell projection. It localises to the cilium. Functionally, probable molecular chaperone that assists the folding of proteins upon ATP hydrolysis. Plays a role in the assembly of BBSome, a complex involved in ciliogenesis regulating transports vesicles to the cilia. Involved in adipogenic differentiation. The chain is BBSome complex assembly protein BBS10 (Bbs10) from Mus musculus (Mouse).